A 260-amino-acid chain; its full sequence is Triosephosphate isomerase (260 aa).

10–12 (NWK) is a substrate binding site. Histidine 100 functions as the Electrophile in the catalytic mechanism. Glutamate 172 (proton acceptor) is an active-site residue. Residues glycine 178, serine 218, and 239–240 (GG) contribute to the substrate site.

Belongs to the triosephosphate isomerase family. Homodimer.

Its subcellular location is the cytoplasm. It catalyses the reaction D-glyceraldehyde 3-phosphate = dihydroxyacetone phosphate. It participates in carbohydrate biosynthesis; gluconeogenesis. The protein operates within carbohydrate degradation; glycolysis; D-glyceraldehyde 3-phosphate from glycerone phosphate: step 1/1. Its function is as follows. Involved in the gluconeogenesis. Catalyzes stereospecifically the conversion of dihydroxyacetone phosphate (DHAP) to D-glyceraldehyde-3-phosphate (G3P). In Corynebacterium diphtheriae (strain ATCC 700971 / NCTC 13129 / Biotype gravis), this protein is Triosephosphate isomerase.